A 651-amino-acid chain; its full sequence is Carboxypeptidase S1 homolog A (651 aa).

An N-terminal signal peptide occupies residues 1 to 19 (MHLATGLAVALPFIGAASA). Cysteine 50 and cysteine 121 are disulfide-bonded. Residues asparagine 77, asparagine 125, asparagine 128, asparagine 161, asparagine 184, and asparagine 202 are each glycosylated (N-linked (GlcNAc...) asparagine). Serine 238 is an active-site residue. N-linked (GlcNAc...) asparagine glycosylation is found at asparagine 260, asparagine 299, asparagine 308, asparagine 347, and asparagine 410. Cystine bridges form between cysteine 325-cysteine 361 and cysteine 332-cysteine 354. Residue aspartate 458 is part of the active site. A substrate-binding site is contributed by cysteine 461. Asparagine 474 and asparagine 504 each carry an N-linked (GlcNAc...) asparagine glycan. Residue histidine 515 is part of the active site. Glutamate 516 contributes to the substrate binding site. The tract at residues 604 to 630 (KSPAGKKQGPPPTSTSPPSPTSSSEGS) is disordered. The span at 612 to 623 (GPPPTSTSPPSP) shows a compositional bias: pro residues. Serine 625 is lipidated: GPI-anchor amidated serine. A propeptide spans 626 to 651 (SSEGSVKEFSVSVLGVSVLAAITFFL) (removed in mature form).

Belongs to the peptidase S10 family.

The protein localises to the cell membrane. The catalysed reaction is Preferential release of a C-terminal arginine or lysine residue.. Functionally, extracellular serine carboxypeptidase that contributes to pathogenicity. This Arthroderma otae (strain ATCC MYA-4605 / CBS 113480) (Microsporum canis) protein is Carboxypeptidase S1 homolog A (SCPA).